A 388-amino-acid chain; its full sequence is P2X purinoceptor 4 (388 aa).

Over 1 to 33 the chain is Cytoplasmic; the sequence is MAGCCSVLGSFLFEYDTPRIVLIRSRKVGLMNR. A helical membrane pass occupies residues 34 to 54; sequence VVQLLILAYVIGWVFVWEKGY. The Extracellular segment spans residues 55 to 338; that stretch reads QETDSVVSSV…KFDIIPTMIN (284 aa). Positions 67 and 69 each coordinate ATP. The CTP site is built by Lys-67 and Lys-69. 5 N-linked (GlcNAc...) asparagine glycosylation sites follow: Asn-75, Asn-110, Asn-131, Asn-153, and Asn-184. Intrachain disulfides connect Cys-116-Cys-165, Cys-126-Cys-149, and Cys-132-Cys-159. ATP is bound by residues Thr-186 and Leu-188. Thr-186 lines the CTP pocket. 2 N-linked (GlcNAc...) asparagine glycosylation sites follow: Asn-199 and Asn-208. 2 disulfide bridges follow: Cys-217–Cys-227 and Cys-261–Cys-270. The ATP site is built by Asn-293, Arg-295, and Lys-313. 3 residues coordinate CTP: Asn-293, Arg-295, and Lys-313. Residues 339–359 traverse the membrane as a helical segment; it reads VGSGLALLGVATVLCDVIVLY. Over 360–388 the chain is Cytoplasmic; sequence CMKKRYYYRDKKYKYVEDYEQGLSGEMNQ.

It belongs to the P2X receptor family. Functional P2RXs are organized as homomeric and heteromeric trimers. Functional P2XRs are organized as homomeric and heteromeric trimers. Forms heterotrimer with P2RX1. Interacts with P2RX7 (via C-terminus); this interaction is functional only in the presence of ATP. Forms heterotrimer with P2RX4; functional differences between homomeric P2RX4 and P2RX4/6 heterotrimer are minor. Interacts with AP1M2.

It is found in the cell membrane. It localises to the lysosome membrane. It catalyses the reaction K(+)(in) = K(+)(out). The catalysed reaction is Na(+)(in) = Na(+)(out). It carries out the reaction Ca(2+)(in) = Ca(2+)(out). With respect to regulation, activated by ATP. pH-dependent and inhibited by acidic pH. Its function is as follows. ATP-gated nonselective transmembrane cation channel permeable to potassium, sodium and calcium. CTP, but not GTP or UTP, functions as a weak affinity agonist for P2RX4. Activated by extracellularly released ATP, it plays multiple role in immunity and central nervous system physiology. Plays a key role in initial steps of T-cell activation and Ca(2+) microdomain formation. Also participates in basal T-cell activity without TCR/CD3 stimulation. Promotes the differentiation and activation of Th17 cells via expression of retinoic acid-related orphan receptor C/RORC. Upon activation, drives microglia motility via the PI3K/Akt pathway. Could also function as an ATP-gated cation channel of lysosomal membranes. This is P2X purinoceptor 4 (P2rx4) from Mus musculus (Mouse).